The following is a 313-amino-acid chain: Glycine--tRNA ligase alpha subunit (313 aa).

It belongs to the class-II aminoacyl-tRNA synthetase family. As to quaternary structure, tetramer of two alpha and two beta subunits.

The protein localises to the cytoplasm. It carries out the reaction tRNA(Gly) + glycine + ATP = glycyl-tRNA(Gly) + AMP + diphosphate. In Leuconostoc mesenteroides subsp. mesenteroides (strain ATCC 8293 / DSM 20343 / BCRC 11652 / CCM 1803 / JCM 6124 / NCDO 523 / NBRC 100496 / NCIMB 8023 / NCTC 12954 / NRRL B-1118 / 37Y), this protein is Glycine--tRNA ligase alpha subunit.